Reading from the N-terminus, the 57-residue chain is Andropin (57 aa).

The signal sequence occupies residues 1–23 (MKYFVVLVVLALILAITVGPSDA).

This sequence belongs to the andropin family. As to expression, ejaculatory duct of adult males.

The protein localises to the secreted. In terms of biological role, male-specific peptide with moderate activity against Gram-positive bacteria. This Drosophila mauritiana (Fruit fly) protein is Andropin (Anp).